Here is a 517-residue protein sequence, read N- to C-terminus: Benzoate 4-monooxygenase bphA (517 aa).

A helical transmembrane segment spans residues 4 to 24 (LLLSPYGAYLGLALLVLYYLL). N-linked (GlcNAc...) asparagine glycosylation is found at asparagine 282 and asparagine 325. Heme is bound at residue cysteine 461.

This sequence belongs to the cytochrome P450 family. Heme serves as cofactor.

The protein resides in the membrane. It carries out the reaction benzoate + reduced [NADPH--hemoprotein reductase] + O2 = 4-hydroxybenzoate + oxidized [NADPH--hemoprotein reductase] + H2O + H(+). Its function is as follows. Cytochrome P450 monooxygenase; part of the benzoic acid degradation pathway also known as the protocatechuic acid pathway. Benzoic acid debradation begins with the conversion of benzoic acid into 4-hydroxybenzoic acid through hydroxylation by the benzoate-4-monooxygenase bphA, and its partner NADPH-cytochrome P450 reductase cprA which act as a mediator in electron donation from NADPH. 4-Hydroxybenzoic acid is then converted into 3,4-dihydroxybenzoic acid (also called protocatechuic acid) by the p-hydroxybenzoate-m-hydroxylase phhA. Protocatechuic acid is converted into 3-carboxy-cis,cis-muconic acid by the intradiol ring-cleavage dioxygenase prcA, which is further metabolized through the 3-oxoadipate pathway to finally enter the tricarboxylic acid cycle (TCA). The chain is Benzoate 4-monooxygenase bphA from Aspergillus niger (strain ATCC MYA-4892 / CBS 513.88 / FGSC A1513).